Reading from the N-terminus, the 1048-residue chain is Putative truncated guanine nucleotide exchange factor SDC25 (1048 aa).

2 disordered regions span residues Ser208–Ser242 and Leu419–Glu444. Low complexity predominate over residues Thr212–Ser224. The 133-residue stretch at Ser578–Lys710 folds into the N-terminal Ras-GEF domain. In terms of domain architecture, Ras-GEF spans Asp748–Lys995. Residues Arg997–Lys1048 form a disordered region. Basic and acidic residues predominate over residues Ser1010–Pro1032. The span at Gln1035–Lys1048 shows a compositional bias: basic residues.

In terms of biological role, promotes the exchange of Ras-bound GDP by GTP. In Saccharomyces cerevisiae (strain ATCC 204508 / S288c) (Baker's yeast), this protein is Putative truncated guanine nucleotide exchange factor SDC25 (SDC25).